We begin with the raw amino-acid sequence, 287 residues long: Large ribosomal subunit protein uL2 (287 aa).

The tract at residues 214–287 (LGRRPEVRGS…SKRGRGGRDA (74 aa)) is disordered. A compositionally biased stretch (basic residues) spans 271–287 (QRRRRKSSKRGRGGRDA).

The protein belongs to the universal ribosomal protein uL2 family. Part of the 50S ribosomal subunit. Forms a bridge to the 30S subunit in the 70S ribosome.

Its function is as follows. One of the primary rRNA binding proteins. Required for association of the 30S and 50S subunits to form the 70S ribosome, for tRNA binding and peptide bond formation. It has been suggested to have peptidyltransferase activity; this is somewhat controversial. Makes several contacts with the 16S rRNA in the 70S ribosome. The protein is Large ribosomal subunit protein uL2 of Synechococcus elongatus (strain ATCC 33912 / PCC 7942 / FACHB-805) (Anacystis nidulans R2).